The sequence spans 356 residues: UDP-N-acetylglucosamine--N-acetylmuramyl-(pentapeptide) pyrophosphoryl-undecaprenol N-acetylglucosamine transferase (356 aa).

UDP-N-acetyl-alpha-D-glucosamine contacts are provided by residues 15–17 (TGG), Asn127, Arg163, Ser191, Ile244, 263–268 (ALTVSE), and Gln288.

Belongs to the glycosyltransferase 28 family. MurG subfamily.

The protein localises to the cell inner membrane. It carries out the reaction di-trans,octa-cis-undecaprenyl diphospho-N-acetyl-alpha-D-muramoyl-L-alanyl-D-glutamyl-meso-2,6-diaminopimeloyl-D-alanyl-D-alanine + UDP-N-acetyl-alpha-D-glucosamine = di-trans,octa-cis-undecaprenyl diphospho-[N-acetyl-alpha-D-glucosaminyl-(1-&gt;4)]-N-acetyl-alpha-D-muramoyl-L-alanyl-D-glutamyl-meso-2,6-diaminopimeloyl-D-alanyl-D-alanine + UDP + H(+). Its pathway is cell wall biogenesis; peptidoglycan biosynthesis. Cell wall formation. Catalyzes the transfer of a GlcNAc subunit on undecaprenyl-pyrophosphoryl-MurNAc-pentapeptide (lipid intermediate I) to form undecaprenyl-pyrophosphoryl-MurNAc-(pentapeptide)GlcNAc (lipid intermediate II). The protein is UDP-N-acetylglucosamine--N-acetylmuramyl-(pentapeptide) pyrophosphoryl-undecaprenol N-acetylglucosamine transferase of Yersinia pestis (strain Pestoides F).